The sequence spans 294 residues: S-adenosylmethionine uptake transporter (294 aa).

10 consecutive transmembrane segments (helical) span residues 8 to 28 (YLTGIGWFLLSLVSSSANDVI), 41 to 61 (VAFFRFFFSSIVLLPFVVYYG), 74 to 91 (ILRGLLLFFGMTSWTYGL), 98 to 118 (TATVVSFSIPLFTLILAVFFL), 121 to 141 (NIIWPRWVVTVVGFIGLVVTL), 148 to 168 (FNPEILYFVLAAISFAMLDII), 177 to 197 (SMISMLFYSAIVTAIVSLPVA), 207 to 227 (FELALLFVLGSSGSLILFFLL), 237 to 257 (ATAPYRYLELVISVIAAYFIF), and 260 to 280 (FPDKSTLHGAVIIIPTTLFII). 2 EamA domains span residues 21–141 (SSSA…VVTL) and 160–280 (ISFA…LFII).

This sequence belongs to the drug/metabolite transporter (DMT) superfamily. 10 TMS drug/metabolite exporter (DME) (TC 2.A.7.3) family.

The protein resides in the cell inner membrane. Functionally, transports S-adenosylmethionine. This chain is S-adenosylmethionine uptake transporter (sam), found in Rickettsia conorii (strain ATCC VR-613 / Malish 7).